A 271-amino-acid polypeptide reads, in one-letter code: Non-homologous end joining protein Ku (271 aa).

Positions 12 to 194 (KLSLVTCPVV…DQKPVPELLS (183 aa)) constitute a Ku domain. Residues 225–249 (EAKKTPPAKKTKAEEKTGKGSAESN) form a disordered region.

It belongs to the prokaryotic Ku family. As to quaternary structure, homodimer. Interacts with LigD.

Functionally, with LigD forms a non-homologous end joining (NHEJ) DNA repair enzyme, which repairs dsDNA breaks with reduced fidelity. Binds linear dsDNA with 5'- and 3'- overhangs but not closed circular dsDNA nor ssDNA. Recruits and stimulates the ligase activity of LigD. The protein is Non-homologous end joining protein Ku of Methylocella silvestris (strain DSM 15510 / CIP 108128 / LMG 27833 / NCIMB 13906 / BL2).